The chain runs to 347 residues: Heat-inducible transcription repressor HrcA (347 aa).

The protein belongs to the HrcA family.

Negative regulator of class I heat shock genes (grpE-dnaK-dnaJ and groELS operons). Prevents heat-shock induction of these operons. The protein is Heat-inducible transcription repressor HrcA of Rhodococcus erythropolis (strain PR4 / NBRC 100887).